A 176-amino-acid polypeptide reads, in one-letter code: Natural cytotoxicity triggering receptor 3 (176 aa).

The N-terminal stretch at 1–18 is a signal peptide; sequence MAWMLLLILIMVYPGSCA. The Ig-like domain maps to 19–126; the sequence is LWVSQPPEIR…VGTGNGTRLV (108 aa). The Extracellular portion of the chain corresponds to 19–135; it reads LWVSQPPEIR…VVEKEYPQLG (117 aa). An intrachain disulfide couples Cys39 to Cys108. N-linked (GlcNAc...) asparagine glycosylation is found at Asn42 and Asn121. Residues 136–156 form a helical membrane-spanning segment; the sequence is AGTVLLLRAGFYAVSFLSVAV. Residues 157–176 are Cytoplasmic-facing; that stretch reads GSTLYYQGKCHCHMGTHCHS.

It belongs to the natural cytotoxicity receptor (NCR) family. Homodimer in the unliganted form. Interacts with CD3Z. Interacts with and is activated by binding to NCR3LG1. Interacts with and is activated by binding to BAG6. Interacts with and is inhibited by binding to LGALS3.

It is found in the cell membrane. In terms of biological role, cell membrane receptor of natural killer/NK cells that is activated by binding of extracellular ligands including BAG6 and NCR3LG1. Stimulates NK cells cytotoxicity toward neighboring cells producing these ligands. It controls, for instance, NK cells cytotoxicity against tumor cells. Engagement of NCR3 by BAG6 also promotes myeloid dendritic cells (DC) maturation, both through killing DCs that did not acquire a mature phenotype, and inducing the release by NK cells of TNFA and IFNG that promote DC maturation. The sequence is that of Natural cytotoxicity triggering receptor 3 (NCR3) from Macaca fascicularis (Crab-eating macaque).